The sequence spans 461 residues: Cysteine--tRNA ligase (461 aa).

Residue Cys29 participates in Zn(2+) binding. The 'HIGH' region signature appears at 31 to 41 (MTVYDFCHIGH). Cys210, His235, and Glu239 together coordinate Zn(2+). Residues 267 to 271 (KMSKS) carry the 'KMSKS' region motif. Lys270 lines the ATP pocket.

This sequence belongs to the class-I aminoacyl-tRNA synthetase family. In terms of assembly, monomer. It depends on Zn(2+) as a cofactor.

It localises to the cytoplasm. The catalysed reaction is tRNA(Cys) + L-cysteine + ATP = L-cysteinyl-tRNA(Cys) + AMP + diphosphate. This Ectopseudomonas mendocina (strain ymp) (Pseudomonas mendocina) protein is Cysteine--tRNA ligase.